The sequence spans 389 residues: Arginine biosynthesis bifunctional protein ArgJ (389 aa).

Residues Thr150, Lys173, Thr184, Glu263, Asn384, and Thr389 each coordinate substrate. The active-site Nucleophile is Thr184.

It belongs to the ArgJ family. As to quaternary structure, heterotetramer of two alpha and two beta chains.

The protein localises to the cytoplasm. It catalyses the reaction N(2)-acetyl-L-ornithine + L-glutamate = N-acetyl-L-glutamate + L-ornithine. The catalysed reaction is L-glutamate + acetyl-CoA = N-acetyl-L-glutamate + CoA + H(+). It functions in the pathway amino-acid biosynthesis; L-arginine biosynthesis; L-ornithine and N-acetyl-L-glutamate from L-glutamate and N(2)-acetyl-L-ornithine (cyclic): step 1/1. Its pathway is amino-acid biosynthesis; L-arginine biosynthesis; N(2)-acetyl-L-ornithine from L-glutamate: step 1/4. Functionally, catalyzes two activities which are involved in the cyclic version of arginine biosynthesis: the synthesis of N-acetylglutamate from glutamate and acetyl-CoA as the acetyl donor, and of ornithine by transacetylation between N(2)-acetylornithine and glutamate. The chain is Arginine biosynthesis bifunctional protein ArgJ from Deinococcus radiodurans (strain ATCC 13939 / DSM 20539 / JCM 16871 / CCUG 27074 / LMG 4051 / NBRC 15346 / NCIMB 9279 / VKM B-1422 / R1).